The following is a 283-amino-acid chain: Adenylate kinase 2, chloroplastic (283 aa).

The N-terminal 59 residues, 1 to 59 (MTGCVNSISPPPVTLYRHRASPSRSSFSLSGDALHSLYRHRRVSRSPSIIAPKFQIVAA), are a transit peptide targeting the chloroplast. 74–79 (ASGKGT) is an ATP binding site. The interval 94–123 (SAGDLLRAEIASGSENGRRAKEHMEKGQLV) is NMP. Residues arginine 100, 121 to 123 (QLV), 150 to 153 (GYPR), and glutamine 157 each bind AMP. The interval 187 to 220 (GRRLDPVTGKIYHLKYSPPETEEIAVRLTQRFDD) is LID. Arginine 188 lines the ATP pocket. AMP contacts are provided by arginine 217 and arginine 228.

It belongs to the adenylate kinase family. Monomer.

Its subcellular location is the plastid. The protein resides in the chloroplast stroma. The enzyme catalyses AMP + ATP = 2 ADP. Catalyzes the reversible transfer of the terminal phosphate group between ATP and AMP. Plays an important role in cellular energy homeostasis and in adenine nucleotide metabolism. Plays a major role in the equilibration of adenylates and de novo synthesis of ADP in the plastid stroma. This chain is Adenylate kinase 2, chloroplastic, found in Arabidopsis thaliana (Mouse-ear cress).